Consider the following 259-residue polypeptide: Caffeoyl-CoA O-methyltransferase 1 (259 aa).

Residues 1 to 14 (MATTTTEATKTSST) show a composition bias toward low complexity. The interval 1 to 29 (MATTTTEATKTSSTNGEDQKQSQNLRHQE) is disordered. At Ala2 the chain carries N-acetylalanine. Lys33 lines the substrate pocket. Residues Thr75, Glu97, 99–100 (GV), Ser105, Asp123, and Ala152 each bind S-adenosyl-L-methionine. Asp175 is a substrate binding site. Position 175 (Asp175) interacts with a divalent metal cation. Asp177 provides a ligand contact to S-adenosyl-L-methionine. The a divalent metal cation site is built by Asp201 and Asn202. Residue Asn206 coordinates substrate.

It belongs to the class I-like SAM-binding methyltransferase superfamily. Cation-dependent O-methyltransferase family. CCoAMT subfamily. A divalent metal cation serves as cofactor. In terms of tissue distribution, expressed in stems and roots. Detected in leaves, siliques, flower buds, flowers. Expressed in the tapetum, but not in the endothecium. Detected in the vascular system of leaves and all flower organs, including stigma, stamens, petals and sepals.

The enzyme catalyses (E)-caffeoyl-CoA + S-adenosyl-L-methionine = (E)-feruloyl-CoA + S-adenosyl-L-homocysteine + H(+). It functions in the pathway aromatic compound metabolism; phenylpropanoid biosynthesis. Functionally, methylates caffeoyl-CoA to feruloyl-CoA. Has a very low activity with caffeic acid and esculetin. Involved in scopoletin biosynthesis in roots. The protein is Caffeoyl-CoA O-methyltransferase 1 (CCOAOMT1) of Arabidopsis thaliana (Mouse-ear cress).